The following is a 449-amino-acid chain: Type 3 secretion system ATPase (449 aa).

178 to 183 (GCGKTT) is a binding site for ATP.

This sequence belongs to the ATPase alpha/beta chains family. T3SS ATPase subfamily. In terms of assembly, the core secretion machinery of the T3SS is composed of approximately 20 different proteins, including cytoplasmic components, a base, an export apparatus and a needle. This subunit is part of the cytosolic complex. Forms homododecamers.

It localises to the cytoplasm. The catalysed reaction is ATP + H2O + cellular proteinSide 1 = ADP + phosphate + cellular proteinSide 2.. Its function is as follows. ATPase component of the type III secretion system (T3SS), also called injectisome, which is used to inject bacterial effector proteins into eukaryotic host cells. Acts as a molecular motor to provide the energy that is required for the export of proteins. Required for type III secretion apparatus (T3SA) formation, proper protein secretion, host cell invasion and virulence. May play a critical role in T3SS substrate recognition, disassembly of the effector/chaperone complex and unfolding of the effector in an ATP-dependent manner prior to secretion. This Pseudomonas syringae pv. syringae protein is Type 3 secretion system ATPase.